Reading from the N-terminus, the 87-residue chain is Cytochrome c oxidase subunit 6B1 (87 aa).

The region spanning 28-74 (TRNCWQNYLDFHRCQKAMTTKGGNVSVCEWYQRVYQSLCPTSWVTDW) is the CHCH domain. The Cx9C motif signature appears at 31-41 (CWQNYLDFHRC). Disulfide bonds link cysteine 31–cysteine 66 and cysteine 41–cysteine 55. Positions 55–66 (CEWYQRVYQSLC) match the Cx10C motif motif.

The protein localises to the mitochondrion intermembrane space. Its function is as follows. Connects the two COX monomers into the physiological dimeric form. This is Cytochrome c oxidase subunit 6B1 (COX6B1) from Macaca fascicularis (Crab-eating macaque).